A 220-amino-acid polypeptide reads, in one-letter code: Dual specificity phosphatase 29 (220 aa).

A Tyrosine-protein phosphatase domain is found at 54–202 (HVNEVWPKLY…LRELDKQLVQ (149 aa)). A substrate-binding site is contributed by 146–153 (HCVMGRSR). The Phosphocysteine intermediate role is filled by C147.

It belongs to the protein-tyrosine phosphatase family. Non-receptor class dual specificity subfamily. Homodimer. Interacts with PRKAA2.

The protein resides in the cytoplasm. Its subcellular location is the nucleus. It carries out the reaction O-phospho-L-tyrosyl-[protein] + H2O = L-tyrosyl-[protein] + phosphate. The catalysed reaction is O-phospho-L-seryl-[protein] + H2O = L-seryl-[protein] + phosphate. It catalyses the reaction O-phospho-L-threonyl-[protein] + H2O = L-threonyl-[protein] + phosphate. Dual specificity phosphatase able to dephosphorylate phosphotyrosine, phosphoserine and phosphothreonine residues within the same substrate, with a preference for phosphotyrosine as a substrate. Involved in the modulation of intracellular signaling cascades. In skeletal muscle regulates systemic glucose homeostasis by activating, AMPK, an energy sensor protein kinase. Affects MAP kinase signaling though modulation of the ERK1/2 cascade in skeletal muscle promoting muscle cell differentiation, development and atrophy. This is Dual specificity phosphatase 29 (DUSP29) from Pan troglodytes (Chimpanzee).